The primary structure comprises 517 residues: Endoglucanase A (517 aa).

The N-terminal stretch at 1-25 is a signal peptide; it reads MKRSLLKTCSIIAGATIIFSSLSIS. The active-site Proton donor is the Glu185. The active-site Nucleophile is Glu309. Positions 382 to 392 are enriched in basic and acidic residues; that stretch reads HPEATEDDKPS. The disordered stretch occupies residues 382-424; sequence HPEATEDDKPSTDVTNPDSGNTKPDSGNTNPGTETTTPTDNEK. Positions 393-407 are enriched in polar residues; the sequence is TDVTNPDSGNTKPDS. A compositionally biased stretch (low complexity) spans 408 to 420; it reads GNTNPGTETTTPT. Positions 416–517 constitute a CBM2 domain; that stretch reads TTTPTDNEKI…VISNFEYKFD (102 aa).

Belongs to the glycosyl hydrolase 5 (cellulase A) family.

It catalyses the reaction Endohydrolysis of (1-&gt;4)-beta-D-glucosidic linkages in cellulose, lichenin and cereal beta-D-glucans.. Hydrolyzes barley beta-glucan, lichenan, carboxymethylcellulose and xylan. It shows preferential activity against the larger cellooligosaccharides (cellohexaose and cellopentaose); cellotetraose is the smallest substrate degraded completely. In Clostridium longisporum, this protein is Endoglucanase A (celA).